The chain runs to 43 residues: Protein PsbN (43 aa).

A helical membrane pass occupies residues 7–27 (LSISIGVMVVAITGFSIYTAF).

The protein belongs to the PsbN family.

It localises to the cellular thylakoid membrane. Functionally, may play a role in photosystem I and II biogenesis. This Trichodesmium erythraeum (strain IMS101) protein is Protein PsbN.